A 192-amino-acid polypeptide reads, in one-letter code: Probable nicotinate-nucleotide adenylyltransferase (192 aa).

Belongs to the NadD family.

It carries out the reaction nicotinate beta-D-ribonucleotide + ATP + H(+) = deamido-NAD(+) + diphosphate. Its pathway is cofactor biosynthesis; NAD(+) biosynthesis; deamido-NAD(+) from nicotinate D-ribonucleotide: step 1/1. Catalyzes the reversible adenylation of nicotinate mononucleotide (NaMN) to nicotinic acid adenine dinucleotide (NaAD). In Shouchella clausii (strain KSM-K16) (Alkalihalobacillus clausii), this protein is Probable nicotinate-nucleotide adenylyltransferase.